Here is a 310-residue protein sequence, read N- to C-terminus: Tagatose-6-phosphate kinase (310 aa).

It belongs to the carbohydrate kinase PfkB family. LacC subfamily.

It catalyses the reaction D-tagatofuranose 6-phosphate + ATP = D-tagatofuranose 1,6-bisphosphate + ADP + H(+). Its pathway is carbohydrate metabolism; D-tagatose 6-phosphate degradation; D-glyceraldehyde 3-phosphate and glycerone phosphate from D-tagatose 6-phosphate: step 1/2. The chain is Tagatose-6-phosphate kinase from Streptococcus mutans serotype c (strain ATCC 700610 / UA159).